A 444-amino-acid chain; its full sequence is Type I restriction enzyme EcoDI specificity subunit (444 aa).

The protein belongs to the type-I restriction system S methylase family. In terms of assembly, the type I restriction/modification system is composed of three polypeptides R, M and S; the restriction enzyme has stoichiometry R(2)M(2)S(1) while the methyltransferase is M(2)S(1).

The specificity (S) subunit of a type I restriction enzyme; this subunit dictates DNA sequence specificity. The M and S subunits together form a methyltransferase (MTase) that methylates two adenine residues of the sequence 5'-TTAN(7)GTCY-3'. In the presence of the R subunit the complex can also act as an endonuclease, binding to the same target sequence but cutting the DNA some distance from this site. Whether the DNA is cut or modified depends on the methylation state of the target sequence. When the target site is unmodified, the DNA is cut. When the target site is hemimethylated, the complex acts as a maintenance MTase modifying the DNA so that both strands become methylated. After locating a non-methylated recognition site, the enzyme complex serves as a molecular motor that translocates DNA in an ATP-dependent manner until a collision occurs that triggers cleavage. The sequence is that of Type I restriction enzyme EcoDI specificity subunit from Escherichia coli.